Reading from the N-terminus, the 388-residue chain is Formate-dependent phosphoribosylglycinamide formyltransferase (388 aa).

Residues 20–21 (EL) and glutamate 80 contribute to the N(1)-(5-phospho-beta-D-ribosyl)glycinamide site. ATP-binding positions include arginine 112, lysine 153, 158–163 (SSGKGQ), 193–196 (EEFV), and glutamate 201. The ATP-grasp domain occupies 117–306 (RLASEKLGLR…EFEIHVRSIL (190 aa)). Mg(2+) is bound by residues glutamate 265 and glutamate 277. N(1)-(5-phospho-beta-D-ribosyl)glycinamide-binding positions include aspartate 284, lysine 352, and 359 to 360 (RR).

It belongs to the PurK/PurT family. Homodimer.

The catalysed reaction is N(1)-(5-phospho-beta-D-ribosyl)glycinamide + formate + ATP = N(2)-formyl-N(1)-(5-phospho-beta-D-ribosyl)glycinamide + ADP + phosphate + H(+). Its pathway is purine metabolism; IMP biosynthesis via de novo pathway; N(2)-formyl-N(1)-(5-phospho-D-ribosyl)glycinamide from N(1)-(5-phospho-D-ribosyl)glycinamide (formate route): step 1/1. Involved in the de novo purine biosynthesis. Catalyzes the transfer of formate to 5-phospho-ribosyl-glycinamide (GAR), producing 5-phospho-ribosyl-N-formylglycinamide (FGAR). Formate is provided by PurU via hydrolysis of 10-formyl-tetrahydrofolate. This is Formate-dependent phosphoribosylglycinamide formyltransferase from Methanococcus vannielii (strain ATCC 35089 / DSM 1224 / JCM 13029 / OCM 148 / SB).